The primary structure comprises 142 residues: Non-specific lipid transfer protein GPI-anchored 34 (142 aa).

A signal peptide spans 1 to 22 (MAVAVTAVLFLAVVIAPQWTET). The tract at residues 21–43 (ETKKPPRPSDTSDTSGTSGRDRR) is disordered. Positions 29–38 (SDTSDTSGTS) are enriched in low complexity. Disulfide bonds link Cys46/Cys85, Cys57/Cys69, Cys70/Cys106, and Cys83/Cys114. Residue Asn120 is the site of GPI-anchor amidated asparagine attachment. Residues 121–142 (GGATKKIVASMGLFGVVASLFF) constitute a propeptide, removed in mature form.

The protein belongs to the plant LTP family.

Its subcellular location is the cell membrane. Its function is as follows. Probable lipid transfer protein. The sequence is that of Non-specific lipid transfer protein GPI-anchored 34 from Arabidopsis thaliana (Mouse-ear cress).